A 447-amino-acid chain; its full sequence is MKPVIALVGRPNVGKSTLFNRLTRSRDALVADLPGLTRDRHYGEGRMGERPFLVIDTGGFEPVAKEGIMHEMAKQTKQAVAEADVVIFIVDGRQGLTPHDKTITDFLRKSGRSVMLVVNKAEGMKYTMVTADFYELGLGDPYVISAAHGDGVSDLVEESLDIAFAQRPPEEEVPESKDRSIRLAIVGRPNVGKSTLVNTLLGEERVIAFDLPGTTRDSIEIPFEREGKLYTLIDTAGIRRRGKVFEAIEKFSVVKTLQSISEANVVLLLLDAQQDISEQDAHIAGFILESGRALVVGVNKWDGLTSDRRDEIKIDLERKLGFLSFAKTHFVSALKSSGIGPMMKSVDNAYAAAMSNLSTPKLTRALIEAVEHQQPRRKGSIRPKLRYAHQGGMNPPIVVIHGNALDAIDANYKRFLEKHFRETFSLVGTPLRIELRSGKNPFSRSEK.

EngA-type G domains are found at residues 3–167 (PVIA…FAQR) and 181–354 (IRLA…AAAM). Residues 9-16 (GRPNVGKS), 56-60 (DTGGF), 119-122 (NKAE), 187-194 (GRPNVGKS), 234-238 (DTAGI), and 299-302 (NKWD) contribute to the GTP site. Residues 355 to 439 (SNLSTPKLTR…PLRIELRSGK (85 aa)) enclose the KH-like domain.

Belongs to the TRAFAC class TrmE-Era-EngA-EngB-Septin-like GTPase superfamily. EngA (Der) GTPase family. Associates with the 50S ribosomal subunit.

In terms of biological role, GTPase that plays an essential role in the late steps of ribosome biogenesis. This chain is GTPase Der, found in Herminiimonas arsenicoxydans.